The following is a 320-amino-acid chain: MQTRNTFSWIREEITRSISVSLIIYIITRASISSAYPIFAQQNYENPREATGRIVCANCHLASKPVDIEVPQAVLPDTVFEAVVKIPYDMQLKQVLANGKKGALNVGAVLILPEGFELAPPDRISPEMKEKIGNLSFQNYRPNKKNILVIGPVPGQKYSEITFPILAPDPATNKDVHFLKYPIYVGGNRGRGQIYPDGSKSNNTVYNATAGGIISKIVRKEKGGYEITIVDPSNERQVIDIIPRGLELLVSEGESIKLDQPLTSNPNVGGFGQGDAEIVLQDPLRVQGLLFFLASVVLAQIFLVLKKKQFEKVQLSEMNF.

The signal sequence occupies residues 1 to 35; it reads MQTRNTFSWIREEITRSISVSLIIYIITRASISSA. 4 residues coordinate heme: tyrosine 36, cysteine 56, cysteine 59, and histidine 60. The helical transmembrane segment at 286-306 threads the bilayer; sequence VQGLLFFLASVVLAQIFLVLK.

This sequence belongs to the cytochrome f family. As to quaternary structure, the 4 large subunits of the cytochrome b6-f complex are cytochrome b6, subunit IV (17 kDa polypeptide, petD), cytochrome f and the Rieske protein, while the 4 small subunits are PetG, PetL, PetM and PetN. The complex functions as a dimer. The cofactor is heme.

Its subcellular location is the plastid. The protein resides in the chloroplast thylakoid membrane. In terms of biological role, component of the cytochrome b6-f complex, which mediates electron transfer between photosystem II (PSII) and photosystem I (PSI), cyclic electron flow around PSI, and state transitions. The protein is Cytochrome f of Draba nemorosa (Woodland whitlowgrass).